The primary structure comprises 338 residues: Aspartate carbamoyltransferase catalytic subunit (338 aa).

Carbamoyl phosphate-binding residues include R59 and T60. K87 lines the L-aspartate pocket. 3 residues coordinate carbamoyl phosphate: R109, H142, and Q145. R182 and R253 together coordinate L-aspartate. Residues G294 and P295 each contribute to the carbamoyl phosphate site.

This sequence belongs to the aspartate/ornithine carbamoyltransferase superfamily. ATCase family. In terms of assembly, heterododecamer (2C3:3R2) of six catalytic PyrB chains organized as two trimers (C3), and six regulatory PyrI chains organized as three dimers (R2).

It catalyses the reaction carbamoyl phosphate + L-aspartate = N-carbamoyl-L-aspartate + phosphate + H(+). It participates in pyrimidine metabolism; UMP biosynthesis via de novo pathway; (S)-dihydroorotate from bicarbonate: step 2/3. Catalyzes the condensation of carbamoyl phosphate and aspartate to form carbamoyl aspartate and inorganic phosphate, the committed step in the de novo pyrimidine nucleotide biosynthesis pathway. In Prochlorococcus marinus (strain MIT 9301), this protein is Aspartate carbamoyltransferase catalytic subunit.